The primary structure comprises 220 residues: Zinc-finger homeodomain protein 2 (220 aa).

Residues 1–11 (MNFEDQEEDME) show a composition bias toward acidic residues. The tract at residues 1–40 (MNFEDQEEDMEMSGVNPPCGYDSLSGEGATSSGGGGVGRS) is disordered. Over residues 31 to 40 (SSGGGGVGRS) the composition is skewed to gly residues. Residues 49 to 98 (YRECLKNHAVNIGGHAVDGCCEFMPSGEDGTLDALKCAACGCHRNFHRKE) form a ZF-HD dimerization-type zinc finger. The segment at 100–160 (ESIGGRAHRV…SSSGGTTKRF (61 aa)) is disordered. The segment at residues 157 to 220 (TKRFRTKFTA…NNKNSLGKKP (64 aa)) is a DNA-binding region (homeobox; atypical).

Homo or heterodimer. Interacts with ZHD1, ZHD3, ZHD4, ZHD5, ZHD6, ZHD7, ZHD8, ZHD9, ZHD10 and ZHD11. Mostly expressed in flowers and, to a lower extent, in inflorescence, stems and leaves.

It is found in the nucleus. Its function is as follows. Essential protein. Putative transcription factor. In Arabidopsis thaliana (Mouse-ear cress), this protein is Zinc-finger homeodomain protein 2 (ZHD1).